The chain runs to 448 residues: Bifunctional protein GlmU (448 aa).

The segment at 1 to 232 (MTARSSLTIV…EDEVRGINTK (232 aa)) is pyrophosphorylase. Residues 11 to 14 (LAAG), lysine 25, glutamine 78, and 83 to 84 (GT) contribute to the UDP-N-acetyl-alpha-D-glucosamine site. Aspartate 108 lines the Mg(2+) pocket. Positions 144, 158, 173, and 230 each coordinate UDP-N-acetyl-alpha-D-glucosamine. Residue asparagine 230 participates in Mg(2+) binding. The linker stretch occupies residues 233–253 (AQLAQAEAAMQARLRQAAMDA). An N-acetyltransferase region spans residues 254 to 448 (GVTLIAPETV…FRNAKLRQTK (195 aa)). Residues arginine 319 and lysine 337 each coordinate UDP-N-acetyl-alpha-D-glucosamine. Histidine 349 serves as the catalytic Proton acceptor. Tyrosine 352 and asparagine 363 together coordinate UDP-N-acetyl-alpha-D-glucosamine. Acetyl-CoA is bound by residues alanine 366, 372-373 (NY), serine 409, and arginine 426. Positions 427-448 (SPQTTKEGAAARFRNAKLRQTK) are disordered.

It in the N-terminal section; belongs to the N-acetylglucosamine-1-phosphate uridyltransferase family. The protein in the C-terminal section; belongs to the transferase hexapeptide repeat family. In terms of assembly, homotrimer. Requires Mg(2+) as cofactor.

The protein resides in the cytoplasm. It carries out the reaction alpha-D-glucosamine 1-phosphate + acetyl-CoA = N-acetyl-alpha-D-glucosamine 1-phosphate + CoA + H(+). The catalysed reaction is N-acetyl-alpha-D-glucosamine 1-phosphate + UTP + H(+) = UDP-N-acetyl-alpha-D-glucosamine + diphosphate. The protein operates within nucleotide-sugar biosynthesis; UDP-N-acetyl-alpha-D-glucosamine biosynthesis; N-acetyl-alpha-D-glucosamine 1-phosphate from alpha-D-glucosamine 6-phosphate (route II): step 2/2. It functions in the pathway nucleotide-sugar biosynthesis; UDP-N-acetyl-alpha-D-glucosamine biosynthesis; UDP-N-acetyl-alpha-D-glucosamine from N-acetyl-alpha-D-glucosamine 1-phosphate: step 1/1. Its pathway is bacterial outer membrane biogenesis; LPS lipid A biosynthesis. Its function is as follows. Catalyzes the last two sequential reactions in the de novo biosynthetic pathway for UDP-N-acetylglucosamine (UDP-GlcNAc). The C-terminal domain catalyzes the transfer of acetyl group from acetyl coenzyme A to glucosamine-1-phosphate (GlcN-1-P) to produce N-acetylglucosamine-1-phosphate (GlcNAc-1-P), which is converted into UDP-GlcNAc by the transfer of uridine 5-monophosphate (from uridine 5-triphosphate), a reaction catalyzed by the N-terminal domain. This is Bifunctional protein GlmU from Bradyrhizobium sp. (strain ORS 278).